The following is a 37-amino-acid chain: Large ribosomal subunit protein bL36 (37 aa).

This sequence belongs to the bacterial ribosomal protein bL36 family.

The sequence is that of Large ribosomal subunit protein bL36 from Borreliella burgdorferi (strain ATCC 35210 / DSM 4680 / CIP 102532 / B31) (Borrelia burgdorferi).